We begin with the raw amino-acid sequence, 277 residues long: uncharacterized protein (277 aa).

Disordered stretches follow at residues K33–R168 and N210–F277. Over residues N34–S45 the composition is skewed to basic and acidic residues. Basic residues predominate over residues L86–S99. 3 stretches are compositionally biased toward basic and acidic residues: residues K100–V113, A151–R168, and T216–K230. The segment covering D231–R241 has biased composition (basic residues). Residues R242–N258 are compositionally biased toward basic and acidic residues. The segment covering K259–N271 has biased composition (polar residues).

Its subcellular location is the cytoplasm. This is an uncharacterized protein from Saccharomyces cerevisiae (strain ATCC 204508 / S288c) (Baker's yeast).